The chain runs to 210 residues: MGRGKIEIKRIENSSNRQVTYSKRRNGILKKAKEISVLCDARVSVIIFASSGKMHEFSSTSLVDILDQYHKLTGRRLLDAKHENLDNEINKVKKDNDNMQIELRHLKGEDITSLNHRELMILEDALENGLTSIRNKQNEVLRMMRKKTQSMEEEQDQLNCQLRQLEIATMNRNMGEIGEVFQQRENHDYQNHMPFAFRVQPMQPNLQERL.

An MADS-box domain is found at Arg-3–Phe-57. The K-box domain maps to His-82 to Asn-173.

Petals.

It is found in the nucleus. Probable transcription factor. The polypeptide is Floral homeotic protein FBP1 (FBP1) (Petunia hybrida (Petunia)).